Consider the following 1308-residue polypeptide: Receptor tyrosine-protein kinase erbB-4 (1308 aa).

Residues 1–25 form the signal peptide; it reads MKPATGLWVWVSLLVAAGTVQPSDS. The Extracellular portion of the chain corresponds to 26–651; the sequence is QSVCAGTENK…STLPQHARTP (626 aa). An intrachain disulfide couples C29 to C56. N-linked (GlcNAc...) asparagine glycans are attached at residues N138, N174, and N181. Intrachain disulfides connect C156-C186, C189-C197, C193-C205, C213-C221, C217-C229, C230-C238, C234-C246, C249-C258, C262-C289, C293-C304, C308-C323, and C326-C330. A glycan (N-linked (GlcNAc...) asparagine) is linked at N253. Residues N358, N410, N473, and N495 are each glycosylated (N-linked (GlcNAc...) asparagine). Intrachain disulfides connect C503–C512, C507–C520, C523–C532, C536–C552, C555–C569, C559–C577, C580–C589, C593–C614, C617–C625, and C621–C633. N548 carries an N-linked (GlcNAc...) asparagine glycan. N-linked (GlcNAc...) asparagine glycosylation is present at N576. An N-linked (GlcNAc...) asparagine glycan is attached at N620. A helical membrane pass occupies residues 652 to 675; sequence LIAAGVIGGLFILVIVGLTFAVYV. The Nuclear localization signal motif lies at 676–684; it reads RRKSIKKKR. Topologically, residues 676–1308 are cytoplasmic; the sequence is RRKSIKKKRA…PPYRHRNTVV (633 aa). Positions 718 to 985 constitute a Protein kinase domain; sequence LKRVKVLGSG…RMARDPQRYL (268 aa). ATP-binding positions include 724–732, K751, 797–799, and 843–848; these read LGSGAFGTV, QLM, and DLAARN. Residue D843 is the Proton acceptor of the active site. Residues Y875, Y1035, Y1056, Y1150, Y1162, Y1188, Y1202, Y1242, Y1258, and Y1284 each carry the phosphotyrosine; by autocatalysis modification. 2 consecutive short sequence motifs (PPxY motif) follow at residues 1032–1035 and 1053–1056; these read PPIY and PPAY. Positions 1117–1150 are disordered; the sequence is PHVQEDSSTQRYSADPTVFAPERSPRGELDEEGY. Residues 1298 to 1301 carry the PPxY motif 3 motif; it reads PPPY. Positions 1306-1308 match the PDZ-binding motif; it reads TVV.

The protein belongs to the protein kinase superfamily. Tyr protein kinase family. EGF receptor subfamily. In terms of assembly, monomer in the absence of bound ligand. Homodimer or heterodimer with another ERBB family member upon ligand binding, thus forming heterotetramers. Interacts with EGFR and ERBB2. Interacts with CBFA2T3. Interacts with DLG2 (via its PDZ domain), DLG3 (via its PDZ domain), DLG4 (via its PDZ domain) and SNTB2 (via its PDZ domain). Interacts with MUC1. Interacts (via its PPxy motifs) with WWOX. Interacts (via the PPxY motif 3 of isoform JM-A CYT-2) with YAP1 (via the WW domain 1 of isoform 1). Interacts (isoform JM-A CYT-1 and isoform JM-B CYT-1) with WWP1. Interacts (via its intracellular domain) with TRIM28. Interacts (via the intracellular domains of both CYT-1 and CYT-2 isoforms) with KAP1; the interaction does not phosphorylate KAP1 but represses ERBB4-mediated transcriptional activity. Interacts with PRPU, DDX23, MATR3, RBM15, ILF3, KAP1, U5S1, U2SURP, ITCH, HNRNPU, AP2A1, NULC, LEO1, WWP2, IGHG1, HXK1, GRB7 and SRRT. Interacts (phosphorylated isoform JM-A CYT-1 and isoform JM-B CYT-1) with PIK3R1. Interacts with SHC1. Interacts with GRB2. Interacts (soluble intracellular domain) with STAT5A. Interacts (soluble intracellular domain) with BCL2. Interacts (phosphorylated) with STAT1. Isoform JM-A CYT-1 and isoform JM-A CYT-2 are processed by ADAM17. Proteolytic processing in response to ligand or 12-O-tetradecanoylphorbol-13-acetate stimulation results in the production of 120 kDa soluble receptor forms and intermediate membrane-anchored 80 kDa fragments (m80HER4), which are further processed by a presenilin-dependent gamma-secretase to release a cytoplasmic intracellular domain (E4ICD; E4ICD1/s80Cyt1 or E4ICD2/s80Cyt2, depending on the isoform). Membrane-anchored 80 kDa fragments of the processed isoform JM-A CYT-1 are more readily degraded by the proteasome than fragments of isoform JM-A CYT-2, suggesting a prevalence of E4ICD2 over E4ICD1. Isoform JM-B CYT-1 and isoform JM-B CYT-2 lack the ADAM17 cleavage site and are not processed by ADAM17, precluding further processing by gamma-secretase. In terms of processing, autophosphorylated on tyrosine residues in response to ligand binding. Autophosphorylation occurs in trans, i.e. one subunit of the dimeric receptor phosphorylates tyrosine residues on the other subunit. Ligands trigger phosphorylation at specific tyrosine residues, thereby creating binding sites for scaffold proteins and effectors. Constitutively phosphorylated at a basal level when overexpressed in heterologous systems; ligand binding leads to increased phosphorylation. Phosphorylation at Tyr-1035 is important for interaction with STAT1. Phosphorylation at Tyr-1056 is important for interaction with PIK3R1. Phosphorylation at Tyr-1242 is important for interaction with SHC1. Phosphorylation at Tyr-1188 may also contribute to the interaction with SHC1. Isoform JM-A CYT-2 is constitutively phosphorylated on tyrosine residues in a ligand-independent manner. E4ICD2 but not E4ICD1 is phosphorylated on tyrosine residues. Post-translationally, ubiquitinated. During mitosis, the ERBB4 intracellular domain is ubiquitinated by the APC/C complex and targeted to proteasomal degradation. Isoform JM-A CYT-1 and isoform JM-B CYT-1 are ubiquitinated by WWP1. The ERBB4 intracellular domain (E4ICD1) is ubiquitinated, and this involves NEDD4. As to expression, expressed at highest levels in brain, heart, kidney, in addition to skeletal muscle, parathyroid, cerebellum, pituitary, spleen, testis and breast. Lower levels in thymus, lung, salivary gland, and pancreas. Isoform JM-A CYT-1 and isoform JM-B CYT-1 are expressed in cerebellum, but only the isoform JM-B is expressed in the heart.

The protein resides in the cell membrane. It localises to the nucleus. It is found in the mitochondrion. It catalyses the reaction L-tyrosyl-[protein] + ATP = O-phospho-L-tyrosyl-[protein] + ADP + H(+). With respect to regulation, binding of a cognate ligand leads to dimerization and activation by autophosphorylation on tyrosine residues. In vitro kinase activity is increased by Mg(2+). Inhibited by PD153035, lapatinib, gefitinib (iressa, ZD1839), AG1478 and BIBX1382BS. Functionally, tyrosine-protein kinase that plays an essential role as cell surface receptor for neuregulins and EGF family members and regulates development of the heart, the central nervous system and the mammary gland, gene transcription, cell proliferation, differentiation, migration and apoptosis. Required for normal cardiac muscle differentiation during embryonic development, and for postnatal cardiomyocyte proliferation. Required for normal development of the embryonic central nervous system, especially for normal neural crest cell migration and normal axon guidance. Required for mammary gland differentiation, induction of milk proteins and lactation. Acts as cell-surface receptor for the neuregulins NRG1, NRG2, NRG3 and NRG4 and the EGF family members BTC, EREG and HBEGF. Ligand binding triggers receptor dimerization and autophosphorylation at specific tyrosine residues that then serve as binding sites for scaffold proteins and effectors. Ligand specificity and signaling is modulated by alternative splicing, proteolytic processing, and by the formation of heterodimers with other ERBB family members, thereby creating multiple combinations of intracellular phosphotyrosines that trigger ligand- and context-specific cellular responses. Mediates phosphorylation of SHC1 and activation of the MAP kinases MAPK1/ERK2 and MAPK3/ERK1. Isoform JM-A CYT-1 and isoform JM-B CYT-1 phosphorylate PIK3R1, leading to the activation of phosphatidylinositol 3-kinase and AKT1 and protect cells against apoptosis. Isoform JM-A CYT-1 and isoform JM-B CYT-1 mediate reorganization of the actin cytoskeleton and promote cell migration in response to NRG1. Isoform JM-A CYT-2 and isoform JM-B CYT-2 lack the phosphotyrosine that mediates interaction with PIK3R1, and hence do not phosphorylate PIK3R1, do not protect cells against apoptosis, and do not promote reorganization of the actin cytoskeleton and cell migration. Proteolytic processing of isoform JM-A CYT-1 and isoform JM-A CYT-2 gives rise to the corresponding soluble intracellular domains (4ICD) that translocate to the nucleus, promote nuclear import of STAT5A, activation of STAT5A, mammary epithelium differentiation, cell proliferation and activation of gene expression. The ERBB4 soluble intracellular domains (4ICD) colocalize with STAT5A at the CSN2 promoter to regulate transcription of milk proteins during lactation. The ERBB4 soluble intracellular domains can also translocate to mitochondria and promote apoptosis. The chain is Receptor tyrosine-protein kinase erbB-4 (ERBB4) from Homo sapiens (Human).